The sequence spans 79 residues: UPF0291 protein lp_2062 (79 aa).

It belongs to the UPF0291 family.

The protein localises to the cytoplasm. The chain is UPF0291 protein lp_2062 from Lactiplantibacillus plantarum (strain ATCC BAA-793 / NCIMB 8826 / WCFS1) (Lactobacillus plantarum).